The chain runs to 297 residues: Small ribosomal subunit protein uS2 (297 aa).

The interval 252 to 297 (GVPGTAFSAATAAPTSWEADGGDWAASSAAPAGESWAETQPAEAKW) is disordered. The span at 256-289 (TAFSAATAAPTSWEADGGDWAASSAAPAGESWAE) shows a compositional bias: low complexity.

This sequence belongs to the universal ribosomal protein uS2 family. Component of the small ribosomal subunit. Mature ribosomes consist of a small (40S) and a large (60S) subunit. The 40S subunit contains about 33 different proteins and 1 molecule of RNA (18S). The 60S subunit contains about 49 different proteins and 3 molecules of RNA (25S, 5.8S and 5S). Interacts with rps21.

It localises to the cytoplasm. Required for the assembly and/or stability of the 40S ribosomal subunit. Required for the processing of the 20S rRNA-precursor to mature 18S rRNA in a late step of the maturation of 40S ribosomal subunits. The sequence is that of Small ribosomal subunit protein uS2 (rps0) from Aspergillus fumigatus (strain CBS 144.89 / FGSC A1163 / CEA10) (Neosartorya fumigata).